The primary structure comprises 360 residues: Probable neutral protease 2 homolog MCYG_04257 (360 aa).

Residues 1 to 17 (MQLIAFLAALGVPVAFA) form the signal peptide. A propeptide spanning residues 18–182 (ATIPSVPLNH…KVKAGSIDKR (165 aa)) is cleaved from the precursor. The cysteines at positions 190 and 261 are disulfide-linked. N-linked (GlcNAc...) asparagine glycosylation is present at Asn262. Intrachain disulfides connect Cys268–Cys286 and Cys300–Cys360. Residue His311 coordinates Zn(2+). Glu312 is a catalytic residue. His315 and Asp326 together coordinate Zn(2+).

It belongs to the peptidase M35 family. Zn(2+) is required as a cofactor.

It is found in the secreted. It catalyses the reaction Preferential cleavage of bonds with hydrophobic residues in P1'. Also 3-Asn-|-Gln-4 and 8-Gly-|-Ser-9 bonds in insulin B chain.. In terms of biological role, probable secreted metalloprotease that shows high activities on basic nuclear substrates such as histone and protamine. May be involved in virulence. This chain is Probable neutral protease 2 homolog MCYG_04257, found in Arthroderma otae (strain ATCC MYA-4605 / CBS 113480) (Microsporum canis).